Consider the following 284-residue polypeptide: 3-methyl-2-oxobutanoate hydroxymethyltransferase 2 (284 aa).

Asp49 and Asp88 together coordinate Mg(2+). Residues Asp49–Ser50, Asp88, and Lys118 contribute to the 3-methyl-2-oxobutanoate site. Glu120 is a binding site for Mg(2+). Glu187 (proton acceptor) is an active-site residue.

Belongs to the PanB family. As to quaternary structure, homodecamer; pentamer of dimers. Mg(2+) serves as cofactor.

It localises to the cytoplasm. The catalysed reaction is 3-methyl-2-oxobutanoate + (6R)-5,10-methylene-5,6,7,8-tetrahydrofolate + H2O = 2-dehydropantoate + (6S)-5,6,7,8-tetrahydrofolate. It participates in cofactor biosynthesis; (R)-pantothenate biosynthesis; (R)-pantoate from 3-methyl-2-oxobutanoate: step 1/2. Catalyzes the reversible reaction in which hydroxymethyl group from 5,10-methylenetetrahydrofolate is transferred onto alpha-ketoisovalerate to form ketopantoate. The polypeptide is 3-methyl-2-oxobutanoate hydroxymethyltransferase 2 (Burkholderia cenocepacia (strain HI2424)).